A 324-amino-acid polypeptide reads, in one-letter code: Phospho-N-acetylmuramoyl-pentapeptide-transferase (324 aa).

10 helical membrane passes run 5 to 25 (AIVIAMAVSFLITVVLSPLFI), 57 to 77 (IMILLAIVATTLWITPKIAGL), 81 to 101 (TYLLLLVTVGYGVLGFLDDMI), 117 to 137 (FIGQLLIAAIFFAVYRQSGFS), 147 to 167 (WSVDLGWAYGVLLLFMLVGGS), 176 to 196 (LDGLLAGTAAIAFGAYAVLAW), 203 to 223 (VAVFCVAVVGAVLGFLVFNAH), 227 to 247 (VFMGDTGSLALGGAIAAVAVL), 250 to 270 (LELLLVIIGGVFVIETLSVII), and 302 to 322 (IVVTFWAVGLLFAMLGIYIEV).

It belongs to the glycosyltransferase 4 family. MraY subfamily. It depends on Mg(2+) as a cofactor.

The protein resides in the cell membrane. The catalysed reaction is UDP-N-acetyl-alpha-D-muramoyl-L-alanyl-gamma-D-glutamyl-meso-2,6-diaminopimeloyl-D-alanyl-D-alanine + di-trans,octa-cis-undecaprenyl phosphate = di-trans,octa-cis-undecaprenyl diphospho-N-acetyl-alpha-D-muramoyl-L-alanyl-D-glutamyl-meso-2,6-diaminopimeloyl-D-alanyl-D-alanine + UMP. The protein operates within cell wall biogenesis; peptidoglycan biosynthesis. Catalyzes the initial step of the lipid cycle reactions in the biosynthesis of the cell wall peptidoglycan: transfers peptidoglycan precursor phospho-MurNAc-pentapeptide from UDP-MurNAc-pentapeptide onto the lipid carrier undecaprenyl phosphate, yielding undecaprenyl-pyrophosphoryl-MurNAc-pentapeptide, known as lipid I. The polypeptide is Phospho-N-acetylmuramoyl-pentapeptide-transferase (Geobacillus kaustophilus (strain HTA426)).